A 520-amino-acid chain; its full sequence is Transactivator/viroplasmin protein (520 aa).

A disordered region spans residues Gln487–Asp520.

The protein belongs to the caulimoviridae viroplasmin family.

The protein resides in the host cytoplasm. In terms of biological role, enhances the ribosomal termination-reinitiation event leading to the translation of major open reading frames on the polycistronic viral RNAs. This is Transactivator/viroplasmin protein from Arabidopsis thaliana (Mouse-ear cress).